The following is a 1173-amino-acid chain: DNA polymerase catalytic subunit (1173 aa).

Disordered regions lie at residues 554–625 and 1123–1144; these read PSLP…SASG and EGPG…PPRK. Residues 564–578 show a composition bias toward gly residues; that stretch reads GGDGAGLEGGDGGTA. The segment covering 591–606 has biased composition (acidic residues); sequence DGEDEDDPEGGDEGEN. Residues 607 to 618 are compositionally biased toward basic and acidic residues; it reads GECRENGLEKEG. Residues 1123–1138 show a composition bias toward gly residues; sequence EGPGRGEGLGVGGGEG.

Belongs to the DNA polymerase type-B family.

The protein resides in the host nucleus. It catalyses the reaction DNA(n) + a 2'-deoxyribonucleoside 5'-triphosphate = DNA(n+1) + diphosphate. In Rattus, this protein is DNA polymerase catalytic subunit (UL54).